The primary structure comprises 118 residues: Non-specific lipid-transfer protein 2A (118 aa).

The signal sequence occupies residues 1–26 (MARAQLVLVALVAAALLLAGPHTTMA). 4 disulfide bridges follow: Cys-30–Cys-77, Cys-40–Cys-54, Cys-55–Cys-100, and Cys-75–Cys-114.

This sequence belongs to the plant LTP family.

Its function is as follows. Plant non-specific lipid-transfer proteins transfer phospholipids as well as galactolipids across membranes. May play a role in wax or cutin deposition in the cell walls of expanding epidermal cells and certain secretory tissues. In Oryza sativa subsp. japonica (Rice), this protein is Non-specific lipid-transfer protein 2A (LTP2-A).